A 148-amino-acid polypeptide reads, in one-letter code: MKVILTENIDSLGLIGSEVAVADGYARNYLLPKKKAVLATEANRKVVELKRVKWEAKIAKEKALAEEMAKRIEGVKVTLKAKVSEEDRLYGSIKVKDIQDALAEKGVEVEKSMILLAESIKTLGTFEVPVRVFAGVKPEIIVEVVPED.

This sequence belongs to the bacterial ribosomal protein bL9 family.

Its function is as follows. Binds to the 23S rRNA. The chain is Large ribosomal subunit protein bL9 from Desulfatibacillum aliphaticivorans.